A 738-amino-acid chain; its full sequence is MRGPSGALWLLLALRTVLGGMEVRWCATSDPEQHKCGNMSEAFREAGIQPSLLCVRGTSADHCVQLIAAQEADAITLDGGAIYEAGKEHGLKPVVGEVYDQEVGTSYYAVAVVRRSSHVTIDTLKGVKSCHTGINRTVGWNVPVGYLVESGRLSVMGCDVLKAVSDYFGGSCVPGAGETSYSESLCRLCRGDSSGEGVCDKSPLERYYDYSGAFRCLAEGAGDVAFVKHSTVLENTDGKTLPSWGQALLSQDFELLCRDGSRADVTEWRQCHLARVPAHAVVVRADTDGGLIFRLLNEGQRLFSHEGSSFQMFSSEAYGQKDLLFKDSTSELVPIATQTYEAWLGHEYLHAMKGLLCDPNRLPPYLRWCVLSTPEIQKCGDMAVAFRRQRLKPEIQCVSAKSPQHCMERIQAEQVDAVTLSGEDIYTAGKTYGLVPAAGEHYAPEDSSNSYYVVAVVRRDSSHAFTLDELRGKRSCHAGFGSPAGWDVPVGALIQRGFIRPKDCDVLTAVSEFFNASCVPVNNPKNYPSSLCALCVGDEQGRNKCVGNSQERYYGYRGAFRCLVENAGDVAFVRHTTVFDNTNGHNSEPWAAELRSEDYELLCPNGARAEVSQFAACNLAQIPPHAVMVRPDTNIFTVYGLLDKAQDLFGDDHNKNGFKMFDSSNYHGQDLLFKDATVRAVPVGEKTTYRGWLGLDYVAALEGMSSQQCSGAAAPAPGAPLLPLLLPALAARLLPPAL.

Residues 1-19 (MRGPSGALWLLLALRTVLG) form the signal peptide. The tract at residues 20 to 30 (GMEVRWCATSD) is antigenic epitope. Transferrin-like domains follow at residues 23-357 (VRWC…GLLC) and 366-706 (LRWC…GMSS). Intrachain disulfides connect cysteine 26–cysteine 63 and cysteine 36–cysteine 54. Asparagine 38 carries an N-linked (GlcNAc...) asparagine glycan. Aspartate 78 and tyrosine 107 together coordinate Fe(3+). Disulfide bonds link cysteine 130–cysteine 216, cysteine 172–cysteine 189, cysteine 186–cysteine 199, and cysteine 257–cysteine 271. A hydrogencarbonate-binding site is contributed by threonine 132. Asparagine 135 carries N-linked (GlcNAc...) asparagine glycosylation. Residues arginine 136, valine 138, and glycine 139 each coordinate hydrogencarbonate. A Fe(3+)-binding site is contributed by tyrosine 210. Positions 279, 421, and 451 each coordinate Fe(3+). The residue at position 462 (serine 462) is a Phosphoserine; by FAM20C. A glycan (N-linked (GlcNAc...) asparagine) is linked at asparagine 515. Fe(3+) contacts are provided by tyrosine 556 and histidine 625. Cysteine 709 is lipidated: GPI-anchor amidated cysteine. A propeptide spans 710–738 (SGAAAPAPGAPLLPLLLPALAARLLPPAL) (removed in mature form).

Belongs to the transferrin family. In terms of tissue distribution, found predominantly in human melanomas and in certain fetal tissues; also found in liver, epithelium, umbilical chord, placenta and sweat gland ducts.

The protein resides in the cell membrane. Functionally, involved in iron cellular uptake. Seems to be internalized and then recycled back to the cell membrane. Binds a single atom of iron per subunit. Could also bind zinc. This chain is Melanotransferrin, found in Homo sapiens (Human).